We begin with the raw amino-acid sequence, 415 residues long: Amylovoran biosynthesis protein AmsJ (415 aa).

Belongs to the polysaccharide pyruvyl transferase family.

Its pathway is glycan metabolism; exopolysaccharide biosynthesis. Involved in the biosynthesis of amylovoran which functions as a virulence factor. The chain is Amylovoran biosynthesis protein AmsJ (amsJ) from Erwinia amylovora (Fire blight bacteria).